The sequence spans 277 residues: Hematopoietically-expressed homeobox protein HHEX (277 aa).

Disordered regions lie at residues Ala-47–Phe-69 and Trp-199–Arg-277. Residues His-52 to Pro-63 are compositionally biased toward pro residues. Residues Arg-144–Lys-203 constitute a DNA-binding region (homeobox). Basic and acidic residues predominate over residues Thr-210–Ser-226. Residues Glu-250–Ile-266 show a composition bias toward acidic residues.

In all hematopoietic tissues except peripheral blood erythrocytes and in the liver and lung.

The protein localises to the nucleus. In terms of biological role, recognizes the DNA sequence 5'-ATTAA-3'. Transcriptional repressor. May play a role in hematopoietic differentiation. The sequence is that of Hematopoietically-expressed homeobox protein HHEX (HHEX) from Gallus gallus (Chicken).